The chain runs to 20 residues: ITCGQVTGSLAPXIPFLRTG.

This sequence belongs to the plant LTP family.

Its function is as follows. Plant non-specific lipid-transfer proteins transfer phospholipids as well as galactolipids across membranes. May play a role in wax or cutin deposition in the cell walls of expanding epidermal cells and certain secretory tissues. The sequence is that of Non-specific lipid-transfer protein from Citrus limon (Lemon).